The primary structure comprises 190 residues: Crossover junction endodeoxyribonuclease RuvC (190 aa).

Active-site residues include Asp8, Glu67, and Asp139. Mg(2+)-binding residues include Asp8, Glu67, and Asp139.

It belongs to the RuvC family. In terms of assembly, homodimer which binds Holliday junction (HJ) DNA. The HJ becomes 2-fold symmetrical on binding to RuvC with unstacked arms; it has a different conformation from HJ DNA in complex with RuvA. In the full resolvosome a probable DNA-RuvA(4)-RuvB(12)-RuvC(2) complex forms which resolves the HJ. The cofactor is Mg(2+).

It is found in the cytoplasm. The enzyme catalyses Endonucleolytic cleavage at a junction such as a reciprocal single-stranded crossover between two homologous DNA duplexes (Holliday junction).. Functionally, the RuvA-RuvB-RuvC complex processes Holliday junction (HJ) DNA during genetic recombination and DNA repair. Endonuclease that resolves HJ intermediates. Cleaves cruciform DNA by making single-stranded nicks across the HJ at symmetrical positions within the homologous arms, yielding a 5'-phosphate and a 3'-hydroxyl group; requires a central core of homology in the junction. The consensus cleavage sequence is 5'-(A/T)TT(C/G)-3'. Cleavage occurs on the 3'-side of the TT dinucleotide at the point of strand exchange. HJ branch migration catalyzed by RuvA-RuvB allows RuvC to scan DNA until it finds its consensus sequence, where it cleaves and resolves the cruciform DNA. This is Crossover junction endodeoxyribonuclease RuvC from Haemophilus influenzae (strain PittGG).